The chain runs to 170 residues: N-alpha-acetyltransferase 50 (170 aa).

One can recognise an N-acetyltransferase domain in the interval 6–155 (IELGDVTPHN…DAHVLQKNLK (150 aa)). Tyrosine 31 is a substrate binding site. The active site involves tyrosine 73. Substrate is bound at residue methionine 75. 77–90 (LGCLAPYRRLGIGT) is an acetyl-CoA binding site. 79 to 90 (CLAPYRRLGIGT) contacts CoA. Residue histidine 112 is part of the active site. 117 to 126 (NESAIDFYRK) lines the CoA pocket. Positions 138–141 (YYKR) are substrate.

This sequence belongs to the acetyltransferase family. GNAT subfamily.

Its subcellular location is the cytoplasm. The protein resides in the nucleus. The enzyme catalyses N-terminal L-methionyl-L-alanyl-[protein] + acetyl-CoA = N-terminal N(alpha)-acetyl-L-methionyl-L-alanyl-[protein] + CoA + H(+). It carries out the reaction N-terminal L-methionyl-L-seryl-[protein] + acetyl-CoA = N-terminal N(alpha)-acetyl-L-methionyl-L-seryl-[protein] + CoA + H(+). The catalysed reaction is N-terminal L-methionyl-L-valyl-[protein] + acetyl-CoA = N-terminal N(alpha)-acetyl-L-methionyl-L-valyl-[protein] + CoA + H(+). It catalyses the reaction N-terminal L-methionyl-L-threonyl-[protein] + acetyl-CoA = N-terminal N(alpha)-acetyl-L-methionyl-L-threonyl-[protein] + CoA + H(+). The enzyme catalyses N-terminal L-methionyl-L-lysyl-[protein] + acetyl-CoA = N-terminal N(alpha)-acetyl-L-methionyl-L-lysyl-[protein] + CoA + H(+). It carries out the reaction N-terminal L-methionyl-L-leucyl-[protein] + acetyl-CoA = N-terminal N(alpha)-acetyl-L-methionyl-L-leucyl-[protein] + CoA + H(+). The catalysed reaction is N-terminal L-methionyl-L-phenylalanyl-[protein] + acetyl-CoA = N-terminal N(alpha)-acetyl-L-methionyl-L-phenylalanyl-[protein] + CoA + H(+). It catalyses the reaction N-terminal L-methionyl-L-tyrosyl-[protein] + acetyl-CoA = N-terminal N(alpha)-acetyl-L-methionyl-L-tyrosyl-[protein] + CoA + H(+). In terms of biological role, N-alpha-acetyltransferase that acetylates the N-terminus of proteins that retain their initiating methionine. Has a broad substrate specificity: able to acetylate the initiator methionine of most peptides, except for those with a proline in second position. Also displays N-epsilon-acetyltransferase activity by mediating acetylation of the side chain of specific lysines on proteins. The relevance of N-epsilon-acetyltransferase activity is however unclear. Required for sister chromatid cohesion during mitosis by promoting binding of CDCA5/sororin to cohesin. In Xenopus laevis (African clawed frog), this protein is N-alpha-acetyltransferase 50 (naa50).